A 429-amino-acid chain; its full sequence is Enolase (429 aa).

Q163 is a (2R)-2-phosphoglycerate binding site. E205 (proton donor) is an active-site residue. Positions 242, 286, and 313 each coordinate Mg(2+). (2R)-2-phosphoglycerate-binding residues include K338, R367, S368, and K389. The active-site Proton acceptor is the K338.

Belongs to the enolase family. Mg(2+) is required as a cofactor.

It is found in the cytoplasm. It localises to the secreted. The protein resides in the cell surface. The enzyme catalyses (2R)-2-phosphoglycerate = phosphoenolpyruvate + H2O. It participates in carbohydrate degradation; glycolysis; pyruvate from D-glyceraldehyde 3-phosphate: step 4/5. In terms of biological role, catalyzes the reversible conversion of 2-phosphoglycerate (2-PG) into phosphoenolpyruvate (PEP). It is essential for the degradation of carbohydrates via glycolysis. This Pelobacter propionicus (strain DSM 2379 / NBRC 103807 / OttBd1) protein is Enolase.